We begin with the raw amino-acid sequence, 224 residues long: Small ribosomal subunit protein uS3 (224 aa).

The 69-residue stretch at 38-106 (IRKFISKKLK…QVHINIVEIK (69 aa)) folds into the KH type-2 domain.

The protein belongs to the universal ribosomal protein uS3 family. In terms of assembly, part of the 30S ribosomal subunit. Forms a tight complex with proteins S10 and S14.

In terms of biological role, binds the lower part of the 30S subunit head. Binds mRNA in the 70S ribosome, positioning it for translation. This chain is Small ribosomal subunit protein uS3, found in Lactobacillus helveticus (strain DPC 4571).